A 236-amino-acid polypeptide reads, in one-letter code: Small ribosomal subunit protein uS2c (236 aa).

The protein belongs to the universal ribosomal protein uS2 family.

The protein resides in the plastid. It localises to the chloroplast. The polypeptide is Small ribosomal subunit protein uS2c (rps2) (Manihot esculenta (Cassava)).